The following is a 63-amino-acid chain: Large ribosomal subunit protein uL30 (63 aa).

It belongs to the universal ribosomal protein uL30 family. As to quaternary structure, part of the 50S ribosomal subunit.

The chain is Large ribosomal subunit protein uL30 from Rickettsia peacockii (strain Rustic).